Consider the following 495-residue polypeptide: Probable cytochrome P450 4s3 (495 aa).

Heme is bound by residues Glu-307 and Cys-436.

The protein belongs to the cytochrome P450 family. Heme serves as cofactor.

Its subcellular location is the endoplasmic reticulum membrane. The protein localises to the microsome membrane. Its function is as follows. May be involved in the metabolism of insect hormones and in the breakdown of synthetic insecticides. The sequence is that of Probable cytochrome P450 4s3 (Cyp4s3) from Drosophila melanogaster (Fruit fly).